The chain runs to 246 residues: Adenosylcobinamide-GDP ribazoletransferase (246 aa).

7 helical membrane passes run 30 to 50 (VNWY…VHQA), 51 to 71 (GLVL…WVYV), 105 to 125 (VGAM…GAVA), 131 to 151 (GWGS…LLSI), 167 to 189 (ISSG…AGWY), 193 to 210 (LQVM…LWFS), and 226 to 246 (GAVI…SWWL).

This sequence belongs to the CobS family. It depends on Mg(2+) as a cofactor.

It localises to the cell membrane. It catalyses the reaction alpha-ribazole + adenosylcob(III)inamide-GDP = adenosylcob(III)alamin + GMP + H(+). It carries out the reaction alpha-ribazole 5'-phosphate + adenosylcob(III)inamide-GDP = adenosylcob(III)alamin 5'-phosphate + GMP + H(+). It functions in the pathway cofactor biosynthesis; adenosylcobalamin biosynthesis; adenosylcobalamin from cob(II)yrinate a,c-diamide: step 7/7. In terms of biological role, joins adenosylcobinamide-GDP and alpha-ribazole to generate adenosylcobalamin (Ado-cobalamin). Also synthesizes adenosylcobalamin 5'-phosphate from adenosylcobinamide-GDP and alpha-ribazole 5'-phosphate. The sequence is that of Adenosylcobinamide-GDP ribazoletransferase from Brevibacillus brevis (strain 47 / JCM 6285 / NBRC 100599).